The following is a 135-amino-acid chain: Large ribosomal subunit protein uL16 (135 aa).

Belongs to the universal ribosomal protein uL16 family. As to quaternary structure, part of the 50S ribosomal subunit.

In terms of biological role, binds 23S rRNA and is also seen to make contacts with the A and possibly P site tRNAs. This chain is Large ribosomal subunit protein uL16, found in Coprothermobacter proteolyticus (strain ATCC 35245 / DSM 5265 / OCM 4 / BT).